The sequence spans 230 residues: LexA repressor (230 aa).

Residues 28–48 (IREIGEALDIRSTNGVNDHLK) constitute a DNA-binding region (H-T-H motif). Catalysis depends on for autocatalytic cleavage activity residues Ser148 and Lys185.

Belongs to the peptidase S24 family. As to quaternary structure, homodimer.

The catalysed reaction is Hydrolysis of Ala-|-Gly bond in repressor LexA.. Functionally, represses a number of genes involved in the response to DNA damage (SOS response), including recA and lexA. In the presence of single-stranded DNA, RecA interacts with LexA causing an autocatalytic cleavage which disrupts the DNA-binding part of LexA, leading to derepression of the SOS regulon and eventually DNA repair. The polypeptide is LexA repressor (Anaeromyxobacter sp. (strain K)).